The primary structure comprises 131 residues: Large ribosomal subunit protein uL22 (131 aa).

The protein belongs to the universal ribosomal protein uL22 family. In terms of assembly, part of the 50S ribosomal subunit.

Functionally, this protein binds specifically to 23S rRNA; its binding is stimulated by other ribosomal proteins, e.g. L4, L17, and L20. It is important during the early stages of 50S assembly. It makes multiple contacts with different domains of the 23S rRNA in the assembled 50S subunit and ribosome. The globular domain of the protein is located near the polypeptide exit tunnel on the outside of the subunit, while an extended beta-hairpin is found that lines the wall of the exit tunnel in the center of the 70S ribosome. This Phytoplasma mali (strain AT) protein is Large ribosomal subunit protein uL22.